We begin with the raw amino-acid sequence, 126 residues long: Aspartate 1-decarboxylase (126 aa).

Serine 25 functions as the Schiff-base intermediate with substrate; via pyruvic acid in the catalytic mechanism. Serine 25 is subject to Pyruvic acid (Ser). Substrate is bound at residue threonine 57. The active-site Proton donor is tyrosine 58. Residue 73-75 (GAA) participates in substrate binding.

This sequence belongs to the PanD family. Heterooctamer of four alpha and four beta subunits. Pyruvate serves as cofactor. In terms of processing, is synthesized initially as an inactive proenzyme, which is activated by self-cleavage at a specific serine bond to produce a beta-subunit with a hydroxyl group at its C-terminus and an alpha-subunit with a pyruvoyl group at its N-terminus.

The protein localises to the cytoplasm. The catalysed reaction is L-aspartate + H(+) = beta-alanine + CO2. It participates in cofactor biosynthesis; (R)-pantothenate biosynthesis; beta-alanine from L-aspartate: step 1/1. In terms of biological role, catalyzes the pyruvoyl-dependent decarboxylation of aspartate to produce beta-alanine. This chain is Aspartate 1-decarboxylase, found in Escherichia coli O6:K15:H31 (strain 536 / UPEC).